A 249-amino-acid chain; its full sequence is tRNA (guanine-N(1)-)-methyltransferase (249 aa).

S-adenosyl-L-methionine is bound by residues glycine 113 and 133–138 (IGDYVL).

The protein belongs to the RNA methyltransferase TrmD family. In terms of assembly, homodimer.

The protein resides in the cytoplasm. The enzyme catalyses guanosine(37) in tRNA + S-adenosyl-L-methionine = N(1)-methylguanosine(37) in tRNA + S-adenosyl-L-homocysteine + H(+). Specifically methylates guanosine-37 in various tRNAs. This chain is tRNA (guanine-N(1)-)-methyltransferase, found in Aeromonas hydrophila subsp. hydrophila (strain ATCC 7966 / DSM 30187 / BCRC 13018 / CCUG 14551 / JCM 1027 / KCTC 2358 / NCIMB 9240 / NCTC 8049).